The chain runs to 1422 residues: Guanine nucleotide exchange factor subunit RIC1 (1422 aa).

2 WD repeats span residues 64–103 (TQFGSYKQAEWRPDSTMIAVSTANGYILFFHITSSRGDKY) and 304–343 (NKTGAVKLIRWSPDNSAVIVTWEYGGLSLWSVFGAQLICT). Disordered stretches follow at residues 442 to 462 (NPKYSSARAERMPRHEKSPFA) and 986 to 1005 (SGESETPPSTPTSQEPSSSG). Residues 449 to 460 (RAERMPRHEKSP) show a composition bias toward basic and acidic residues. Phosphothreonine is present on residues Thr991 and Thr995. Phosphoserine occurs at positions 1014, 1016, 1018, 1036, and 1171. A disordered region spans residues 1021-1048 (AENVPPGKFGLQKTLSMPTGPSGKRWSK). Disordered regions lie at residues 1179-1198 (THRDTDRASSPGPQMQDAFL) and 1355-1422 (DTFQ…CSVS). Over residues 1378–1396 (GSCSHGSISQSEPGSNNVV) the composition is skewed to polar residues. Positions 1403–1412 (TTQADEEEPL) are enriched in acidic residues.

It belongs to the RIC1 family. Forms a complex with RGP1; the interaction enhances RAB6A GTPase activity. Interacts (via central domain) with RGP1. Interacts with RAB6A; the interaction is direct with a preference for RAB6A-GDP. Interacts (via C-terminus domain) with RAB33B; the interaction is direct with a preference for RAB33B-GTP. Interacts with GJA1. Expressed in the eye lens.

It localises to the cytoplasm. Its subcellular location is the cytosol. The protein resides in the membrane. The RIC1-RGP1 complex acts as a guanine nucleotide exchange factor (GEF), which activates RAB6A by exchanging bound GDP for free GTP, and may thereby be required for efficient fusion of endosome-derived vesicles with the Golgi compartment. The RIC1-RGP1 complex participates in the recycling of mannose-6-phosphate receptors. Required for phosphorylation and localization of GJA1. Is a regulator of procollagen transport and secretion, and is required for correct cartilage morphogenesis and development of the craniofacial skeleton. The sequence is that of Guanine nucleotide exchange factor subunit RIC1 from Mus musculus (Mouse).